The primary structure comprises 315 residues: Putative methyltransferase SPBC8D2.16c (315 aa).

It belongs to the class IV-like SAM-binding methyltransferase superfamily.

It is found in the cytoplasm. The protein localises to the nucleus. The polypeptide is Putative methyltransferase SPBC8D2.16c (Schizosaccharomyces pombe (strain 972 / ATCC 24843) (Fission yeast)).